The primary structure comprises 72 residues: Large ribosomal subunit protein uL29 (72 aa).

It belongs to the universal ribosomal protein uL29 family.

The polypeptide is Large ribosomal subunit protein uL29 (Prochlorococcus marinus (strain MIT 9301)).